A 129-amino-acid chain; its full sequence is Selenoprotein M (129 aa).

Positions 1 to 19 (MARGLAVFFLLAGACLALA) are cleaved as a signal peptide. Residues C35 and U38 each act as nucleophile in the active site. U38 is a non-standard amino acid (selenocysteine). The segment at 107–129 (KSSKDEQVPEEYQEGPYMEKEEL) is disordered. Residues 126–129 (KEEL) carry the Prevents secretion from ER motif.

It belongs to the selenoprotein M/F family. In terms of tissue distribution, high expression levels observed in hepatopancreas, testis, ovaries and intestine. Also expressed in heart, stomach, gills, cranial ganglia, muscle and hematocytes.

It is found in the endoplasmic reticulum. Functionally, may function as a thiol-disulfide oxidoreductase that participates in disulfide bond formation. Involved in the regulation of reproduction during the period of rapid gonadal development. This Eriocheir sinensis (Chinese mitten crab) protein is Selenoprotein M.